The following is an 81-amino-acid chain: Large ribosomal subunit protein bL31B (81 aa).

It belongs to the bacterial ribosomal protein bL31 family. Type B subfamily. As to quaternary structure, part of the 50S ribosomal subunit.

The chain is Large ribosomal subunit protein bL31B from Borreliella burgdorferi (strain ZS7) (Borrelia burgdorferi).